Consider the following 241-residue polypeptide: MTAPQNGTGNGLQTGADLAVRSDSPLILALPKGRILKALAPVLTRTGIEPDPDCLTESSRRLRFGTSDPNLDVVRVRSFDVATFVAYGGADIGVCGADVLMEFDYPDIYAPLDLGIGGCRISVARPKTMVEDPATGQSRLCVATKYPTIARRHFASRAINAEIVHLNGAMELAPTLDLASVIVDLVDTGSTLRANGLMETETIAHVTSRLIVNRVALKTRPEEISALIERFRAALNTEEAA.

It belongs to the ATP phosphoribosyltransferase family. Short subfamily. Heteromultimer composed of HisG and HisZ subunits.

It localises to the cytoplasm. The enzyme catalyses 1-(5-phospho-beta-D-ribosyl)-ATP + diphosphate = 5-phospho-alpha-D-ribose 1-diphosphate + ATP. It functions in the pathway amino-acid biosynthesis; L-histidine biosynthesis; L-histidine from 5-phospho-alpha-D-ribose 1-diphosphate: step 1/9. Its function is as follows. Catalyzes the condensation of ATP and 5-phosphoribose 1-diphosphate to form N'-(5'-phosphoribosyl)-ATP (PR-ATP). Has a crucial role in the pathway because the rate of histidine biosynthesis seems to be controlled primarily by regulation of HisG enzymatic activity. The sequence is that of ATP phosphoribosyltransferase from Gluconobacter oxydans (strain 621H) (Gluconobacter suboxydans).